The sequence spans 269 residues: Glutamate racemase (269 aa).

Substrate-binding positions include 7-8 and 39-40; these read DS and YG. C70 serves as the catalytic Proton donor/acceptor. Position 71–72 (71–72) interacts with substrate; the sequence is NT. The Proton donor/acceptor role is filled by C194. 195–196 contacts substrate; it reads TH.

It belongs to the aspartate/glutamate racemases family.

The enzyme catalyses L-glutamate = D-glutamate. Its pathway is cell wall biogenesis; peptidoglycan biosynthesis. Its function is as follows. Provides the (R)-glutamate required for cell wall biosynthesis. This Roseobacter denitrificans (strain ATCC 33942 / OCh 114) (Erythrobacter sp. (strain OCh 114)) protein is Glutamate racemase.